Consider the following 681-residue polypeptide: Heat shock 70 kDa protein (681 aa).

The segment covering 655–665 (NFPGGMPGAGM) has biased composition (gly residues). Residues 655 to 681 (NFPGGMPGAGMPGNAPAGSGPTVEEVD) are disordered. Positions 666–675 (PGNAPAGSGP) are enriched in low complexity.

This sequence belongs to the heat shock protein 70 family.

This Plasmodium falciparum protein is Heat shock 70 kDa protein.